Consider the following 211-residue polypeptide: MTRVALTSAVNLAKKLSDAGIRNQAVLKAISQTPREMFLDNALAHKAYENTALPIGQGQTISQPYIVARMTELLLSNMPKKVLEVGTGSGYQAAILAQLVPELCTIERIKGLQIQARQRLKRLDLHNVSFKYGDGWQGWSNRSPFDAIMVTAAAATVPEALLSQLVDGGVLVLPVGENTQQLMRITRHRERFSSENIETVKFVPLVNGELA.

The active site involves Ser-62.

The protein belongs to the methyltransferase superfamily. L-isoaspartyl/D-aspartyl protein methyltransferase family.

The protein resides in the cytoplasm. It catalyses the reaction [protein]-L-isoaspartate + S-adenosyl-L-methionine = [protein]-L-isoaspartate alpha-methyl ester + S-adenosyl-L-homocysteine. Its function is as follows. Catalyzes the methyl esterification of L-isoaspartyl residues in peptides and proteins that result from spontaneous decomposition of normal L-aspartyl and L-asparaginyl residues. It plays a role in the repair and/or degradation of damaged proteins. This is Protein-L-isoaspartate O-methyltransferase from Shewanella putrefaciens (strain CN-32 / ATCC BAA-453).